We begin with the raw amino-acid sequence, 354 residues long: Glyceraldehyde-3-phosphate dehydrogenase (354 aa).

NAD(+) contacts are provided by residues 11 to 12 (TI) and glycine 108. Position 137 to 139 (137 to 139 (SCN)) interacts with D-glyceraldehyde 3-phosphate. Cysteine 138 serves as the catalytic Nucleophile. Arginine 166 contacts NAD(+). 192–193 (HG) serves as a coordination point for D-glyceraldehyde 3-phosphate. Position 299 (glutamine 299) interacts with NAD(+).

Belongs to the glyceraldehyde-3-phosphate dehydrogenase family. In terms of assembly, homotetramer.

Its subcellular location is the cytoplasm. It carries out the reaction D-glyceraldehyde 3-phosphate + phosphate + NADP(+) = (2R)-3-phospho-glyceroyl phosphate + NADPH + H(+). The enzyme catalyses D-glyceraldehyde 3-phosphate + phosphate + NAD(+) = (2R)-3-phospho-glyceroyl phosphate + NADH + H(+). It participates in carbohydrate degradation; glycolysis; pyruvate from D-glyceraldehyde 3-phosphate: step 1/5. This is Glyceraldehyde-3-phosphate dehydrogenase from Haloarcula marismortui (strain ATCC 43049 / DSM 3752 / JCM 8966 / VKM B-1809) (Halobacterium marismortui).